A 98-amino-acid polypeptide reads, in one-letter code: Small ribosomal subunit protein bS20 (98 aa).

It belongs to the bacterial ribosomal protein bS20 family.

Its function is as follows. Binds directly to 16S ribosomal RNA. The sequence is that of Small ribosomal subunit protein bS20 from Synechococcus elongatus (strain ATCC 33912 / PCC 7942 / FACHB-805) (Anacystis nidulans R2).